The following is a 180-amino-acid chain: Dephospho-CoA kinase (180 aa).

A DPCK domain is found at 2–180 (VIGVTGKIGT…VMKLVWEKRE (179 aa)). 10–15 (GTGKST) contacts ATP.

Belongs to the CoaE family.

It is found in the cytoplasm. The enzyme catalyses 3'-dephospho-CoA + ATP = ADP + CoA + H(+). It functions in the pathway cofactor biosynthesis; coenzyme A biosynthesis; CoA from (R)-pantothenate: step 5/5. Functionally, catalyzes the phosphorylation of the 3'-hydroxyl group of dephosphocoenzyme A to form coenzyme A. This chain is Dephospho-CoA kinase, found in Thermotoga maritima (strain ATCC 43589 / DSM 3109 / JCM 10099 / NBRC 100826 / MSB8).